We begin with the raw amino-acid sequence, 199 residues long: Probable GTP-binding protein EngB (199 aa).

One can recognise an EngB-type G domain in the interval 25-199 (IGMEVAFVGY…LKRVLNNWLR (175 aa)). Mg(2+)-binding residues include Ser40 and Thr62.

Belongs to the TRAFAC class TrmE-Era-EngA-EngB-Septin-like GTPase superfamily. EngB GTPase family. Requires Mg(2+) as cofactor.

Functionally, necessary for normal cell division and for the maintenance of normal septation. The sequence is that of Probable GTP-binding protein EngB from Blochmanniella pennsylvanica (strain BPEN).